The primary structure comprises 672 residues: Glycogen [starch] synthase (672 aa).

Lysine 56 contacts UDP-alpha-D-glucose. Positions 645–672 (MRDNEGKVPSAATSRRPSIHSSDGEDDE) are disordered. Over residues 655 to 665 (AATSRRPSIHS) the composition is skewed to polar residues.

It belongs to the glycosyltransferase 3 family. In terms of assembly, forms a hetero-octamer with each protomer of the gsy-1 homotetramer bound to one molecule of gyg-1. The N-terminus is involved in interprotomer contacts with gyg-1. The interaction with gyg-1 is required for glycogen production but is not required for gsy-1 intrinsic activity.

The enzyme catalyses [(1-&gt;4)-alpha-D-glucosyl](n) + UDP-alpha-D-glucose = [(1-&gt;4)-alpha-D-glucosyl](n+1) + UDP + H(+). It participates in glycan biosynthesis; glycogen biosynthesis. Its function is as follows. Transfers the glycosyl residue from UDP-Glc to the non-reducing end of alpha-1,4-glucan. The chain is Glycogen [starch] synthase from Caenorhabditis elegans.